We begin with the raw amino-acid sequence, 290 residues long: Alpha-1,2-colitosyltransferase (290 aa).

It belongs to the glycosyltransferase 11 family. Does not require a metal cofactor. serves as cofactor.

The enzyme catalyses GDP-beta-L-colitose + beta-D-galactosyl-(1-&gt;3)-N-acetyl-D-glucosamine = alpha-L-colitosyl-(1-&gt;2)-beta-D-galactosyl-(1-&gt;3)-N-acetyl-D-glucosamine + GDP + H(+). The protein operates within bacterial outer membrane biogenesis; LPS O-antigen biosynthesis. Addition of metal ions dramatically decreases the activity to 0-40%. Functionally, involved in the biosynthesis of the lipopolysaccharide (LPS) O-antigen region. Catalyzes the transfer of colitose from GDP-colitose to the galactose residue of beta-Gal-(1-&gt;3)-GlcNAc (lacto-N-biose) via an alpha1,2-linkage. Is specific for beta-Gal-(1-&gt;3)-GlcNAc, but can use GDP-L-fucose as the sugar donor with almost the same efficiency as GDP-L-colitose. The polypeptide is Alpha-1,2-colitosyltransferase (Escherichia coli).